The following is a 403-amino-acid chain: 4,4'-dithiodibutanoate disulfide reductase (403 aa).

Glutamine 103 contacts FMN. Catalysis depends on tyrosine 173, which acts as the Proton donor. 348-349 (AR) provides a ligand contact to FMN.

This sequence belongs to the NADH:flavin oxidoreductase/NADH oxidase family. The cofactor is FMN.

It carries out the reaction 2 4-sulfanylbutanoate + NAD(+) = 4,4'-disulfanyldibutanoate + NADH + H(+). With respect to regulation, inactivated by cobalt, nickel and zinc ions. Its function is as follows. Involved in the degradation of the organic disulfide 4,4'-dithiodibutyric acid (DTDB). Catalyzes the initial cleavage of DTDB into 2 molecules of 4-mercaptobutyric acid (4MB). Low activities are observed with other disulfide compounds, such as 3,3'-dithiodipropionic acid DTDP, 3,3'-thiodipropionic acid TDP and DTNB. This chain is 4,4'-dithiodibutanoate disulfide reductase, found in Rhodococcus erythropolis (Arthrobacter picolinophilus).